The primary structure comprises 269 residues: Small ribosomal subunit protein uS2 (269 aa).

Residues 228–269 (QLDSDDDYEEFDESLAEGDYDDYDEEEDEDSETVSSQEGEEE) are disordered. Residues 230-269 (DSDDDYEEFDESLAEGDYDDYDEEEDEDSETVSSQEGEEE) are compositionally biased toward acidic residues.

This sequence belongs to the universal ribosomal protein uS2 family.

The protein is Small ribosomal subunit protein uS2 of Crocosphaera subtropica (strain ATCC 51142 / BH68) (Cyanothece sp. (strain ATCC 51142)).